A 486-amino-acid polypeptide reads, in one-letter code: Cardiolipin synthase A (486 aa).

The next 2 membrane-spanning stretches (helical) occupy residues 3–23 (TFYT…IAGV) and 38–58 (MAWL…YLSL). PLD phosphodiesterase domains are found at residues 219–246 (MDLR…VDPR) and 399–426 (EGGL…DMRS). Catalysis depends on residues His224, Lys226, Asp231, His404, Lys406, and Asp411.

Belongs to the phospholipase D family. Cardiolipin synthase subfamily. ClsA sub-subfamily.

It localises to the cell inner membrane. The enzyme catalyses 2 a 1,2-diacyl-sn-glycero-3-phospho-(1'-sn-glycerol) = a cardiolipin + glycerol. Functionally, catalyzes the reversible phosphatidyl group transfer from one phosphatidylglycerol molecule to another to form cardiolipin (CL) (diphosphatidylglycerol) and glycerol. In Erwinia tasmaniensis (strain DSM 17950 / CFBP 7177 / CIP 109463 / NCPPB 4357 / Et1/99), this protein is Cardiolipin synthase A.